Here is a 626-residue protein sequence, read N- to C-terminus: tRNA uridine 5-carboxymethylaminomethyl modification enzyme MnmG (626 aa).

13–18 contacts FAD; sequence GGGHAG. 273-287 contacts NAD(+); that stretch reads GPRYCPSIEDKIHRF.

Belongs to the MnmG family. As to quaternary structure, homodimer. Heterotetramer of two MnmE and two MnmG subunits. It depends on FAD as a cofactor.

It localises to the cytoplasm. Its function is as follows. NAD-binding protein involved in the addition of a carboxymethylaminomethyl (cmnm) group at the wobble position (U34) of certain tRNAs, forming tRNA-cmnm(5)s(2)U34. In Acinetobacter baumannii (strain ACICU), this protein is tRNA uridine 5-carboxymethylaminomethyl modification enzyme MnmG.